The chain runs to 180 residues: Phosphoribosylaminoimidazole carboxylase (180 aa).

Substrate is bound by residues Ser-35, Asp-38, Ser-62, Lys-65, Gly-89, and Ser-91.

Belongs to the AIR carboxylase family. Class II subfamily.

It carries out the reaction 5-amino-1-(5-phospho-D-ribosyl)imidazole-4-carboxylate + H(+) = 5-amino-1-(5-phospho-beta-D-ribosyl)imidazole + CO2. The protein operates within purine metabolism; IMP biosynthesis via de novo pathway; 5-amino-1-(5-phospho-D-ribosyl)imidazole-4-carboxylate from 5-amino-1-(5-phospho-D-ribosyl)imidazole (carboxylase route): step 1/1. Catalyzes the reversible conversion of 5-aminoimidazole ribonucleotide (AIR) and CO(2) to 4-carboxy-5-aminoimidazole ribonucleotide (CAIR). The protein is Phosphoribosylaminoimidazole carboxylase of Archaeoglobus fulgidus (strain ATCC 49558 / DSM 4304 / JCM 9628 / NBRC 100126 / VC-16).